A 448-amino-acid polypeptide reads, in one-letter code: RNA-binding protein 42 (448 aa).

The disordered stretch occupies residues M1–S29. A2 carries the post-translational modification N-acetylalanine. Residues P11 to G27 are compositionally biased toward gly residues. The residue at position 132 (S132) is a Phosphoserine. Position 149 is an asymmetric dimethylarginine (R149). Residues E204–R448 are necessary for interaction with HNRNPK. Residues L286 to L324 form a disordered region. Basic and acidic residues predominate over residues S313–L324. Residues F349 to W427 form the RRM domain.

It belongs to the RRM RBM42 family. Interacts with HNRNPK.

It is found in the nucleus. The protein localises to the cytoplasm. In terms of biological role, binds (via the RRM domain) to the 3'-untranslated region (UTR) of CDKN1A mRNA. This Bos taurus (Bovine) protein is RNA-binding protein 42 (RBM42).